The chain runs to 701 residues: Polyribonucleotide nucleotidyltransferase (701 aa).

D487 and D493 together coordinate Mg(2+). The 60-residue stretch at 554-613 folds into the KH domain; that stretch reads PTMLAMKIDQDKIRDVIGKGGATIRAICEETKASIDIEDDGSIKIFGETKEAAEAAKQRV. The S1 motif domain occupies 623–691; the sequence is GKIYVGKVER…NRGRIKLSIK (69 aa).

Belongs to the polyribonucleotide nucleotidyltransferase family. Component of the RNA degradosome, which is a multiprotein complex involved in RNA processing and mRNA degradation. It depends on Mg(2+) as a cofactor.

The protein resides in the cytoplasm. The enzyme catalyses RNA(n+1) + phosphate = RNA(n) + a ribonucleoside 5'-diphosphate. Its function is as follows. Involved in mRNA degradation. Catalyzes the phosphorolysis of single-stranded polyribonucleotides processively in the 3'- to 5'-direction. This Stutzerimonas stutzeri (strain A1501) (Pseudomonas stutzeri) protein is Polyribonucleotide nucleotidyltransferase.